A 301-amino-acid chain; its full sequence is Ras-related GTP-binding protein A (301 aa).

GTP-binding positions include 9–16, 57–61, and 122–125; these read GRSESGKT, DCGGQ, and HKMD.

It belongs to the GTR/RAG GTP-binding protein family.

The protein resides in the cytoplasm. It is found in the nucleus. The protein localises to the lysosome. Functionally, guanine nucleotide-binding protein that plays a crucial role in the cellular response to amino acid availability through regulation of the TOR signaling cascade. The sequence is that of Ras-related GTP-binding protein A (ragA) from Dictyostelium discoideum (Social amoeba).